We begin with the raw amino-acid sequence, 70 residues long: Palustrin-2ISa (70 aa).

Residues 1 to 22 (MFTLKKSLLLLFFLGTISLSLC) form the signal peptide. Positions 23–39 (EQERSAEDEGEVIEEEV) are cleaved as a propeptide — removed in mature form. Cysteine 64 and cysteine 70 form a disulfide bridge.

As to expression, expressed by the skin glands.

It is found in the secreted. In terms of biological role, has antimicrobial activity against Gram-negative bacterium E.coli ATCC 8739 (MIC=100 ug), against Gram positive bacteria S.aureus ATCC 6538 (MIC=25 ug), methicillin-resistant S.aureus ATCC 43300 (MIC=100 ug), B.subtilis ATCC 6633 (MIC=12.5 ug) and against fungus C.albicans ATCC 90028 (MIC=100 ug). The protein is Palustrin-2ISa of Odorrana ishikawae (Ishikawa's frog).